Reading from the N-terminus, the 400-residue chain is MAKIDFDRSKEHVNIGTIGHVDHGKTTLTAAIATVLAKHVEGNEARDYGSIDNAPEERERGITINTSHIEYNTEKRHYAHVDCPGHADYVKNMITGAAQMDGAILVVAATDGPMPQTREHILLSKQVGVPKMVVFLNKVDLLGSGSEAEEMADLVEFEIRDLLSQYEFDGENTPVVRGSALKALNGEKAWEDKVMELMSQVDNWIDAPLREVDKPFLMAVEDVFTITGRGTVATGKVERGELKINEEVDIVGYTEKPKRTTVTGIEMFRKNLKTALAGDNAGLLLRGINREQIERGQVLAKPGTIVPHTKFKAAIYALKKEEGGRHTPFFKNYKPQFYFRTTDVTGGIELPNNIEMVTPGDNVDLIVDLISPIAVEVGTKFSIREGGRTVGAGSVTEIVK.

One can recognise a tr-type G domain in the interval 10–209 (KEHVNIGTIG…QVDNWIDAPL (200 aa)). A G1 region spans residues 19 to 26 (GHVDHGKT). A GTP-binding site is contributed by 19-26 (GHVDHGKT). T26 is a Mg(2+) binding site. The segment at 61-65 (GITIN) is G2. Positions 82–85 (DCPG) are G3. GTP-binding positions include 82 to 86 (DCPGH) and 137 to 140 (NKVD). The G4 stretch occupies residues 137-140 (NKVD). A G5 region spans residues 179 to 181 (SAL).

Belongs to the TRAFAC class translation factor GTPase superfamily. Classic translation factor GTPase family. EF-Tu/EF-1A subfamily. In terms of assembly, monomer.

The protein resides in the cytoplasm. The enzyme catalyses GTP + H2O = GDP + phosphate + H(+). Functionally, GTP hydrolase that promotes the GTP-dependent binding of aminoacyl-tRNA to the A-site of ribosomes during protein biosynthesis. The sequence is that of Elongation factor Tu from Mycoplasma mobile (strain ATCC 43663 / 163K / NCTC 11711) (Mesomycoplasma mobile).